A 532-amino-acid chain; its full sequence is Exopolysaccharide phosphotransferase CpsY (532 aa).

This sequence belongs to the stealth family.

The protein is Exopolysaccharide phosphotransferase CpsY (cpsY) of Mycobacterium bovis (strain ATCC BAA-935 / AF2122/97).